Here is a 312-residue protein sequence, read N- to C-terminus: Atrochrysone carboxyl ACP thioesterase AacuM (312 aa).

Zn(2+)-binding residues include H103, H105, D107, and H108. The Proton donor/acceptor role is filled by D107.

This sequence belongs to the metallo-beta-lactamase superfamily. The cofactor is Zn(2+).

The enzyme catalyses atrochrysone carboxyl-[ACP] + H2O = atrochrysone carboxylate + holo-[ACP] + H(+). The protein operates within secondary metabolite biosynthesis. Atrochrysone carboxyl ACP thioesterase; part of the gene cluster that mediates the biosynthesis of the tetrahydroxanthone dimer secalonic acid D. The pathway begins with the synthesis of atrochrysone thioester by the polyketide synthase AacuL. The atrochrysone carboxyl ACP thioesterase AacuM then breaks the thioester bond and releases the atrochrysone carboxylic acid from AacuL. Atrochrysone carboxylic acid is decarboxylated by the decarboxylase AacuI, and oxidized by the anthrone oxygenase AacuG to yield emodin. Emodin is then reduced to emodin hydroquinone by a yet unidentified oxidoreductase. A-ring reduction by the short chain dehydrogenase AacuN, dehydration by the scytalone dehydratase-like protein AacuK and probable spontaneous re-oxidation, results in overall deoxygenation to chrysophanol. Baeyer-Villiger oxidation by the Baeyer-Villiger monooxygenase (BVMO) AacuH then yields monodictyphenone. Monodictyphenone is transformed into compounds with the tetrahydroxanthone skeleton via methylesterification by the methyltransferase AacuQ, followed by the action of the flavin-dependent monooxygenase AacuC, the isomerase AacuP, and the short chain dehydrogenase/reductase AacuF or AacuD. AacuF and AacuD should accept the same compound as a substrate but perform the ketoreduction with a different stereoselectivity, thus yielding blennolides B and A, respectively. In the final step of the biosynthesis, the cytochrome P450 monooxygenase AacuE accepts blennolide B and/or blennolide A to conduct the dimerization reaction to furnish the tetrahydroxanthone dimers, secalonic acids D, B, and F. This chain is Atrochrysone carboxyl ACP thioesterase AacuM, found in Aspergillus aculeatus (strain ATCC 16872 / CBS 172.66 / WB 5094).